The sequence spans 246 residues: ATP synthase subunit a (246 aa).

The propeptide at 1 to 3 (MFY) is removed in mature form. The next 7 helical transmembrane spans lie at 21–41 (LTFS…IIIF), 56–76 (WGVS…GQIG), 82–102 (YFPL…ISMI), 113–133 (VAVV…GLYL), 138–158 (FFAL…LVLI), 184–204 (LMLI…LGFV), and 206–226 (GIIP…IAII).

The protein belongs to the ATPase A chain family. As to quaternary structure, F-type ATPases have 2 components, CF(1) - the catalytic core - and CF(0) - the membrane proton channel. CF(1) has five subunits: alpha(3), beta(3), gamma(1), delta(1), epsilon(1). CF(0) has three main subunits: a, b and c.

Its subcellular location is the mitochondrion inner membrane. Functionally, mitochondrial membrane ATP synthase (F(1)F(0) ATP synthase or Complex V) produces ATP from ADP in the presence of a proton gradient across the membrane which is generated by electron transport complexes of the respiratory chain. F-type ATPases consist of two structural domains, F(1) - containing the extramembraneous catalytic core and F(0) - containing the membrane proton channel, linked together by a central stalk and a peripheral stalk. During catalysis, ATP synthesis in the catalytic domain of F(1) is coupled via a rotary mechanism of the central stalk subunits to proton translocation. Key component of the proton channel; it may play a direct role in the translocation of protons across the membrane. The chain is ATP synthase subunit a (ATP6) from Candida parapsilosis (Yeast).